Consider the following 266-residue polypeptide: Signal peptidase I (266 aa).

Over 1 to 20 the chain is Cytoplasmic; the sequence is MQTDNTKSNTNKTAKQEWGS. A helical transmembrane segment spans residues 21–41; the sequence is FAFVICIALLIRILIMEPFTV. At 42 to 266 the chain is on the periplasmic side; it reads PTGSMKATIL…IFRNLYNTDA (225 aa). Catalysis depends on residues serine 45 and lysine 108.

It belongs to the peptidase S26 family.

It localises to the cell inner membrane. It carries out the reaction Cleavage of hydrophobic, N-terminal signal or leader sequences from secreted and periplasmic proteins.. Its function is as follows. Complements E.coli mutants temperature-sensitive for LepB function. This is Signal peptidase I (lepB) from Rickettsia rickettsii (strain Sheila Smith).